A 134-amino-acid chain; its full sequence is Transcription antitermination protein NusB (134 aa).

The protein belongs to the NusB family.

In terms of biological role, involved in transcription antitermination. Required for transcription of ribosomal RNA (rRNA) genes. Binds specifically to the boxA antiterminator sequence of the ribosomal RNA (rrn) operons. The protein is Transcription antitermination protein NusB of Shewanella baltica (strain OS223).